Reading from the N-terminus, the 86-residue chain is Large ribosomal subunit protein bL31B (86 aa).

This sequence belongs to the bacterial ribosomal protein bL31 family. Type B subfamily. Part of the 50S ribosomal subunit.

In Yersinia enterocolitica serotype O:8 / biotype 1B (strain NCTC 13174 / 8081), this protein is Large ribosomal subunit protein bL31B.